Consider the following 165-residue polypeptide: UPF0303 protein Rleg2_2653 (165 aa).

It belongs to the UPF0303 family.

The protein is UPF0303 protein Rleg2_2653 of Rhizobium leguminosarum bv. trifolii (strain WSM2304).